A 446-amino-acid chain; its full sequence is UDP-N-acetylmuramate--L-alanine ligase (446 aa).

Position 122–128 (122–128 (GTHGKTT)) interacts with ATP.

The protein belongs to the MurCDEF family.

It is found in the cytoplasm. It carries out the reaction UDP-N-acetyl-alpha-D-muramate + L-alanine + ATP = UDP-N-acetyl-alpha-D-muramoyl-L-alanine + ADP + phosphate + H(+). The protein operates within cell wall biogenesis; peptidoglycan biosynthesis. Cell wall formation. The sequence is that of UDP-N-acetylmuramate--L-alanine ligase from Nocardioides sp. (strain ATCC BAA-499 / JS614).